The following is a 120-amino-acid chain: UPF0102 protein TW312 (120 aa).

Belongs to the UPF0102 family.

The chain is UPF0102 protein TW312 from Tropheryma whipplei (strain TW08/27) (Whipple's bacillus).